The chain runs to 330 residues: AKTTAPSVYPLAPVCGDTTGSSVTLGCLVKGYFPEPVTLTWNSGSLSSGVHTFPAVLQSDLYTLSSSVTVTSSTWPSQSITCNVAHPASSTKVDKKIEPRGPTIKPCPPCKCPAPNLLGGPSVFIFPPKIKDVLMISLSPIVTCVVVDVSEDDPDVQISWFVNNVEVHTAQTQTHREDYNSTLRVVSALPIQHQDWMSGKEFKCKVNNKDLPAPIERTISKPKGSVRAPQVYVLPPPEEEMTKKQVTLTCMVTDFMPEDIYVEWTNNGKTELNYKNTEPVLDSDGSYFMYSKLRVEKKNWVERNSYSCSVVHEGLHNHHTTKSFSRTPGK.

3 Ig-like domains span residues 6–98, 121–220, and 229–325; these read PSVY…KKIE, PSVF…RTIS, and PQVY…KSFS. 3 disulfide bridges follow: Cys27–Cys82, Cys144–Cys204, and Cys250–Cys308. An N-linked (GlcNAc...) asparagine glycan is attached at Asn180.

The sequence is that of Ig gamma-2A chain C region, A allele (Ighg) from Mus musculus (Mouse).